A 261-amino-acid polypeptide reads, in one-letter code: Sulfur carrier protein FdhD (261 aa).

Catalysis depends on Cys-105, which acts as the Cysteine persulfide intermediate. Mo-bis(molybdopterin guanine dinucleotide) is bound at residue 245–250; sequence FIRGDR.

The protein belongs to the FdhD family.

It localises to the cytoplasm. In terms of biological role, required for formate dehydrogenase (FDH) activity. Acts as a sulfur carrier protein that transfers sulfur from IscS to the molybdenum cofactor prior to its insertion into FDH. This Listeria innocua serovar 6a (strain ATCC BAA-680 / CLIP 11262) protein is Sulfur carrier protein FdhD.